The primary structure comprises 680 residues: GFSIRAFGAEEQSVPNKQSSVQDYPWYGYDSYSKGYPDYSPLKTYHNLKVNLDGSKEYQAYCFNLTKHFPSKSDSVRSQWYKKLEGTNENFIKLADKPRIEDGQLQQNILRILYNGYPNDRNGIMKGIDPLNAILVTQNAIWYYTDSSYISDTSKAFQQEETDLKLDSQQLQLMRNALKRLINPKEVESLPNQVPANYQLSIFQSSDKTFQNLLSAEYVPDTPPKPGEEPPAKTEKTSVIIRKYAEGDYSKLLEGATLKLAQIEGSGFQEKIFDSNKSGEKVELPNGTYVLSELKPPQGYGVATPITFKVAAEKVLIKNKEGQFVENQNKEIAEPYSVTAFNDFEEIGYLSDFNNYGKFYYAKNTNGTNQVVYCFNADLHSPPDSYDHGANIDPDVSESKEIKYTHVSGYDLYKYAVTPRDKDADLFLKHIKKILDKGYKKKGDTYKTLTEAQFRAATQLAIYYYTDSADLTTLKTYNDNKGYHGFDKLDDATLAVVHELITYAEDVTLPMTQNLDFFVPNSSRYQALIGTQYHPNELIDVISMEDKQAPIIPITHKLTISKTVTGTIADKKKEFNFEIHLKSSDGQAISGTYPTNSGELTVTDGKATFTLKDGESLIVEGLPSGYSYEITETGASDYEVSVNGKNAPDGKATKASVKEDETVAFENRKDLVPPTGLTTD.

Residues 62–211 (CFNLTKHFPS…IFQSSDKTFQ (150 aa)) constitute a cross-link (isoglutamyl cysteine thioester (Cys-Gln)). A disordered region spans residues 217 to 236 (EYVPDTPPKPGEEPPAKTEK). Residues 226–236 (PGEEPPAKTEK) are compositionally biased toward basic and acidic residues. The segment at residues 243–546 (KYAEGDYSKL…ELIDVISMED (304 aa)) is a cross-link (isoaspartyl lysine isopeptide (Lys-Asp)). The CNA-B domain maps to 253 to 311 (LEGATLKLAQIEGSGFQEKIFDSNKSGEKVELPNGTYVLSELKPPQGYGVATPITFKVA). The segment at residues 374-526 (CFNADLHSPP…FFVPNSSRYQ (153 aa)) is a cross-link (isoglutamyl cysteine thioester (Cys-Gln)). A cross-link (isoaspartyl lysine isopeptide (Lys-Asn)) is located at residues 562-667 (KTVTGTIADK…KEDETVAFEN (106 aa)). The VPPTG sorting signal signature appears at 672–676 (VPPTG). A Threonyl lysine isopeptide (Thr-Lys) (interchain with K-? in major pilin subunit) cross-link involves residue threonine 675. A propeptide spans 676-680 (GLTTD) (removed by sortase).

As to quaternary structure, monomer. Proteolytically processed and assembled in pili through a transpeptidation reaction catalyzed by a sortase, which leads to a covalent link between Cpa and a major pilin subunit.

It localises to the fimbrium. In terms of biological role, component of the pilus tip. Can bind covalently, via its two reactive thioester bonds, to molecular targets from host cell surface and can thus mediate adhesion of the streptococcal pili to host cells. Lysine side chains or a carbohydrate with a free amine group might be candidates for Cpa binding. In vitro, can covalently bind to spermidine, but it is unlikely that spermidine is the natural target of Cpa. This chain is Pilus tip adhesin Cpa (cpa), found in Streptococcus pyogenes.